Reading from the N-terminus, the 130-residue chain is Small ribosomal subunit protein uS11 (130 aa).

It belongs to the universal ribosomal protein uS11 family. As to quaternary structure, part of the 30S ribosomal subunit. Interacts with proteins S7 and S18. Binds to IF-3.

In terms of biological role, located on the platform of the 30S subunit, it bridges several disparate RNA helices of the 16S rRNA. Forms part of the Shine-Dalgarno cleft in the 70S ribosome. The protein is Small ribosomal subunit protein uS11 of Nitratiruptor sp. (strain SB155-2).